The sequence spans 371 residues: Fructose-1,6-bisphosphatase class 1 1 (371 aa).

The Mg(2+) site is built by Glu115, Asp134, Leu136, and Asp137. Substrate is bound by residues 137-140 (DGSS), Asn228, and 280-282 (YLY). A Mg(2+)-binding site is contributed by Glu300.

This sequence belongs to the FBPase class 1 family. Homotetramer. It depends on Mg(2+) as a cofactor.

The protein resides in the cytoplasm. The catalysed reaction is beta-D-fructose 1,6-bisphosphate + H2O = beta-D-fructose 6-phosphate + phosphate. It functions in the pathway carbohydrate biosynthesis; gluconeogenesis. This chain is Fructose-1,6-bisphosphatase class 1 1, found in Xanthobacter autotrophicus (strain ATCC BAA-1158 / Py2).